The chain runs to 418 residues: MKYSAPIRLNALSAIVSHHGVLVVIGMLLAVPMAFPLFPIAATYCAAILAILLPLGRLQHVLATASSIAFAWLLTLRNPSRGLVEAGLGDDALHYMNAFYEFQQNYCCSPLDVLKTGIRSAGGGEPIFWYLSYGVAKLFDTPLMVWAILIFISLMLVWIAIYRSTERFAYVVFVAYLSTITLYALQGSAIRQAVAVGLVMVALDLLIRRRLVWAACVGLLAAGTHSSAAALLLVCATVMLFLSKDYGMLARKASWLGQLGRLLVLLVLAVAAVAFGSAEFVMSKIQARLSENQTGSAWEFQLAVEAVLACLFAWLFRMKLPREEKLTYFLFVLLCASTSFFAPAVGARLFRYTYCFYIVYLCVFFFAREGESLGQKKTLASLLFLASLGWAFYIVDVRYQGLFVSGGVIDHFLAGPFF.

10 helical membrane-spanning segments follow: residues 21–41 (VLVV…FPIA), 45–65 (CAAI…LATA), 142–162 (PLMV…IAIY), 170–190 (YVVF…GSAI), 222–242 (AGTH…MLFL), 262–282 (LLVL…EFVM), 296–316 (SAWE…AWLF), 326–346 (LTYF…PAVG), 347–367 (ARLF…FFFA), and 377–397 (KTLA…IVDV).

The protein to S.marcescens SfuB.

It localises to the cell inner membrane. In terms of biological role, probably involved in polymerization and/or export of exopolysaccharide EPS I which functions as a virulence factor. May play a role in export of EPS I or its intermediates across the membranes. The sequence is that of EPS I polysaccharide export inner membrane protein EpsF (epsF) from Ralstonia solanacearum (Pseudomonas solanacearum).